We begin with the raw amino-acid sequence, 566 residues long: MAFNFNWSPLMADASFYTRAQDLLTAALNKSPKPPIIVDDIIVTELNLGSIPPDLEILEIGDLAEDRFRGIFKMSYTGDAFLTLKTRVQANPLNTYLLTRPSFASPLPLAAATPLTIPLQITLSDFKLSGFVILVFSKQKGITVVFRNDPLESLKVSSTFDSIPFVRDFLQREIEAQLRILFMDELPAIIHRLSLRLWVPEYRAGEDIQTQPEQTAGEGPGQDPLASPPQDPVDSLGNALDESEIASLSLDSSVEAHSLFSQKNLLRLGALTDSQRTLSLFTPSIQEVVYRAWTSPSEQGDANGISTAPLSPMLSRTHSQVGSMSSFQDSASIVSSQSRSSASTHTFSGYGLNLGAGRHSKAHSRKRKKRVVDLRRPKTTSDTASVSDESAYTETASNPSVCSAPLPVVNEQPDPITPPLSPESDFRLPAIPERRRASLSRPVPRRDIATEMLRETGGPSAEPPRHRPQPADVDATPRGSLRAHITAQHDNEKQETGPSRQLPSTILPFTDEKSSSSTVDQALVERLAGEIARRMRDEKLMPTSSCGGAFWGRPDHEEYPPPAYGQ.

Residues 1-195 form the SMP-LTD domain; it reads MAFNFNWSPL…LPAIIHRLSL (195 aa). Disordered regions lie at residues 212-237, 349-401, 432-518, and 539-566; these read PEQT…DSLG, GYGL…NPSV, PERR…SSST, and KLMP…AYGQ. A compositionally biased stretch (basic residues) spans 358 to 370; the sequence is RHSKAHSRKRKKR. The span at 380-401 shows a compositional bias: polar residues; that stretch reads TSDTASVSDESAYTETASNPSV. A compositionally biased stretch (basic and acidic residues) spans 444 to 454; it reads PRRDIATEMLR.

Belongs to the MDM34 family. Component of the ER-mitochondria encounter structure (ERMES) or MDM complex, composed of mmm1, mdm10, mdm12 and mdm34.

Its subcellular location is the mitochondrion outer membrane. In terms of biological role, component of the ERMES/MDM complex, which serves as a molecular tether to connect the endoplasmic reticulum (ER) and mitochondria. Components of this complex are involved in the control of mitochondrial shape and protein biogenesis, and function in nonvesicular lipid trafficking between the ER and mitochondria. Mdm34 is required for the interaction of the ER-resident membrane protein mmm1 and the outer mitochondrial membrane-resident beta-barrel protein mdm10. This Aspergillus flavus (strain ATCC 200026 / FGSC A1120 / IAM 13836 / NRRL 3357 / JCM 12722 / SRRC 167) protein is Mitochondrial distribution and morphology protein 34.